We begin with the raw amino-acid sequence, 129 residues long: D-ribose pyranase (129 aa).

The active-site Proton donor is the His-20. Substrate contacts are provided by residues Asp-28, His-96, and 118–120 (YAN).

The protein belongs to the RbsD / FucU family. RbsD subfamily. Homodecamer.

Its subcellular location is the cytoplasm. The enzyme catalyses beta-D-ribopyranose = beta-D-ribofuranose. The protein operates within carbohydrate metabolism; D-ribose degradation; D-ribose 5-phosphate from beta-D-ribopyranose: step 1/2. Catalyzes the interconversion of beta-pyran and beta-furan forms of D-ribose. The sequence is that of D-ribose pyranase from Streptomyces avermitilis (strain ATCC 31267 / DSM 46492 / JCM 5070 / NBRC 14893 / NCIMB 12804 / NRRL 8165 / MA-4680).